Reading from the N-terminus, the 163-residue chain is Globin CTT-Z (163 aa).

The first 16 residues, 1 to 16 (MKFFAVLALCIVGAIA), serve as a signal peptide directing secretion. The 145-residue stretch at 18-162 (PLTSDEAALV…VYTAVFQIVT (145 aa)) folds into the Globin domain. The heme b site is built by H76 and H111.

This sequence belongs to the globin family.

The polypeptide is Globin CTT-Z (CTT-Z) (Chironomus thummi piger (Midge)).